A 263-amino-acid chain; its full sequence is Acyl-[acyl-carrier-protein]--UDP-N-acetylglucosamine O-acyltransferase (263 aa).

The protein belongs to the transferase hexapeptide repeat family. LpxA subfamily. As to quaternary structure, homotrimer.

The protein resides in the cytoplasm. The enzyme catalyses a (3R)-hydroxyacyl-[ACP] + UDP-N-acetyl-alpha-D-glucosamine = a UDP-3-O-[(3R)-3-hydroxyacyl]-N-acetyl-alpha-D-glucosamine + holo-[ACP]. It functions in the pathway glycolipid biosynthesis; lipid IV(A) biosynthesis; lipid IV(A) from (3R)-3-hydroxytetradecanoyl-[acyl-carrier-protein] and UDP-N-acetyl-alpha-D-glucosamine: step 1/6. Functionally, involved in the biosynthesis of lipid A, a phosphorylated glycolipid that anchors the lipopolysaccharide to the outer membrane of the cell. The sequence is that of Acyl-[acyl-carrier-protein]--UDP-N-acetylglucosamine O-acyltransferase from Campylobacter jejuni subsp. jejuni serotype O:2 (strain ATCC 700819 / NCTC 11168).